The primary structure comprises 170 residues: Peptide deformylase (170 aa).

Residues Cys93 and His135 each contribute to the Fe cation site. Glu136 is an active-site residue. Position 139 (His139) interacts with Fe cation.

This sequence belongs to the polypeptide deformylase family. The cofactor is Fe(2+).

It catalyses the reaction N-terminal N-formyl-L-methionyl-[peptide] + H2O = N-terminal L-methionyl-[peptide] + formate. Its function is as follows. Removes the formyl group from the N-terminal Met of newly synthesized proteins. Requires at least a dipeptide for an efficient rate of reaction. N-terminal L-methionine is a prerequisite for activity but the enzyme has broad specificity at other positions. In Acidobacterium capsulatum (strain ATCC 51196 / DSM 11244 / BCRC 80197 / JCM 7670 / NBRC 15755 / NCIMB 13165 / 161), this protein is Peptide deformylase.